A 213-amino-acid chain; its full sequence is Probable nicotinate-nucleotide adenylyltransferase (213 aa).

It belongs to the NadD family.

It catalyses the reaction nicotinate beta-D-ribonucleotide + ATP + H(+) = deamido-NAD(+) + diphosphate. It participates in cofactor biosynthesis; NAD(+) biosynthesis; deamido-NAD(+) from nicotinate D-ribonucleotide: step 1/1. Its function is as follows. Catalyzes the reversible adenylation of nicotinate mononucleotide (NaMN) to nicotinic acid adenine dinucleotide (NaAD). This chain is Probable nicotinate-nucleotide adenylyltransferase, found in Escherichia coli O45:K1 (strain S88 / ExPEC).